The chain runs to 103 residues: Pyrimidine/purine nucleoside phosphorylase (103 aa).

The protein belongs to the nucleoside phosphorylase PpnP family.

The enzyme catalyses a purine D-ribonucleoside + phosphate = a purine nucleobase + alpha-D-ribose 1-phosphate. It catalyses the reaction adenosine + phosphate = alpha-D-ribose 1-phosphate + adenine. It carries out the reaction cytidine + phosphate = cytosine + alpha-D-ribose 1-phosphate. The catalysed reaction is guanosine + phosphate = alpha-D-ribose 1-phosphate + guanine. The enzyme catalyses inosine + phosphate = alpha-D-ribose 1-phosphate + hypoxanthine. It catalyses the reaction thymidine + phosphate = 2-deoxy-alpha-D-ribose 1-phosphate + thymine. It carries out the reaction uridine + phosphate = alpha-D-ribose 1-phosphate + uracil. The catalysed reaction is xanthosine + phosphate = alpha-D-ribose 1-phosphate + xanthine. Its function is as follows. Catalyzes the phosphorolysis of diverse nucleosides, yielding D-ribose 1-phosphate and the respective free bases. Can use uridine, adenosine, guanosine, cytidine, thymidine, inosine and xanthosine as substrates. Also catalyzes the reverse reactions. This is Pyrimidine/purine nucleoside phosphorylase from Laribacter hongkongensis (strain HLHK9).